A 93-amino-acid polypeptide reads, in one-letter code: MTRKKTNPFVAHHLLAKIEKVNMKEEKETIVTWSRASSILPAMVGHTIAIHNGKEHIPIYITNPMVGRKLGEFVPTRHFTSYESARKDTKSRR.

This sequence belongs to the universal ribosomal protein uS19 family.

The protein localises to the plastid. The protein resides in the chloroplast. In terms of biological role, protein S19 forms a complex with S13 that binds strongly to the 16S ribosomal RNA. In Oryza nivara (Indian wild rice), this protein is Small ribosomal subunit protein uS19c.